A 408-amino-acid chain; its full sequence is Chaperone protein dnaJ 1, mitochondrial (408 aa).

Residues 1-26 constitute a mitochondrion transit peptide; that stretch reads MRRFNWVLRHVQARRTFDSAIGLRQG. One can recognise a J domain in the interval 48–113; the sequence is NYYDVLGVSP…ERREEYDKLQ (66 aa). The CR-type zinc finger occupies 173–247; the sequence is GCTKRLSFDA…CRGSGIVEGT (75 aa). 8 residues coordinate Zn(2+): cysteine 186, cysteine 189, cysteine 203, cysteine 206, cysteine 221, cysteine 224, cysteine 235, and cysteine 238. 4 CXXCXGXG motif repeats span residues 186–193, 203–210, 221–228, and 235–242; these read CDSCDGLG, CPTCRGVG, CQTCKGTG, and CMSCRGSG.

The protein belongs to the DnaJ family. B/II subfamily. As to quaternary structure, homodimer. Requires Zn(2+) as cofactor. In terms of tissue distribution, ubiquitous.

The protein localises to the mitochondrion. Plays a continuous role in plant development probably in the structural organization of compartments. The sequence is that of Chaperone protein dnaJ 1, mitochondrial (ATJ1) from Arabidopsis thaliana (Mouse-ear cress).